Reading from the N-terminus, the 468-residue chain is ATP synthase subunit beta (468 aa).

153-160 (GGAGVGKT) contacts ATP.

Belongs to the ATPase alpha/beta chains family. As to quaternary structure, F-type ATPases have 2 components, CF(1) - the catalytic core - and CF(0) - the membrane proton channel. CF(1) has five subunits: alpha(3), beta(3), gamma(1), delta(1), epsilon(1). CF(0) has three main subunits: a(1), b(2) and c(9-12). The alpha and beta chains form an alternating ring which encloses part of the gamma chain. CF(1) is attached to CF(0) by a central stalk formed by the gamma and epsilon chains, while a peripheral stalk is formed by the delta and b chains.

The protein resides in the cell membrane. It carries out the reaction ATP + H2O + 4 H(+)(in) = ADP + phosphate + 5 H(+)(out). Functionally, produces ATP from ADP in the presence of a proton gradient across the membrane. The catalytic sites are hosted primarily by the beta subunits. The sequence is that of ATP synthase subunit beta from Ligilactobacillus salivarius (strain UCC118) (Lactobacillus salivarius).